We begin with the raw amino-acid sequence, 291 residues long: Transcription factor TYE7 (291 aa).

The interval 89 to 109 (FPTDQFFSNPSSYSHSPEVSS) is disordered. Over residues 96-109 (SNPSSYSHSPEVSS) the composition is skewed to low complexity. A Phosphoserine modification is found at Ser104. The region spanning 180-265 (FQKQAHNKIE…EKAVDYILYL (86 aa)) is the bHLH domain. The DNA site is built by His185, Glu189, and Arg193. Positions 221–245 (DSVKKQDEDGAETAATTPLPSAAAT) are disordered. The span at 233–245 (TAATTPLPSAAAT) shows a compositional bias: low complexity. Thr237 carries the post-translational modification Phosphothreonine.

Homodimer. Efficient DNA binding requires dimerization with another bHLH protein.

It is found in the nucleus. Its function is as follows. Transcriptional activator of glycolytic gene expression, such as enolase genes (ENO1 and ENO2), glyceraldehyde-3-phosphate dehydrogenase gene (TDH), phosphoglycerate kinase (PGK1), phosphoglycerate mutase (PGM1), pyruvate kinase (PYK1) and triosephosphate isomerase (TPI1) genes. Binds DNA on E-box motifs: 5'-CANNTG-3'. In response to adenylic nucleotide reduction, activates Ty1 mRNA transcription, possibly by controlling Ty1 antisense transcription. Acts as a cell cycle transcription factor. Its function may also be linked to sulfur metabolism and the cross-regulation between phosphate and sulfate metabolism. The protein is Transcription factor TYE7 of Saccharomyces cerevisiae (strain ATCC 204508 / S288c) (Baker's yeast).